The sequence spans 407 residues: S-adenosylmethionine synthase (407 aa).

His19 contributes to the ATP binding site. Asp21 provides a ligand contact to Mg(2+). Glu47 lines the K(+) pocket. Positions 60 and 103 each coordinate L-methionine. Residues 103–113 (QSQEIADGVDT) are flexible loop. The interval 108–131 (ADGVDTSQEARGDGHFEEDDRAGA) is disordered. Residues 178 to 180 (DGK), Asp258, 264 to 265 (RK), Ala281, and Lys285 contribute to the ATP site. L-methionine is bound at residue Asp258. Lys289 provides a ligand contact to L-methionine.

This sequence belongs to the AdoMet synthase family. As to quaternary structure, homotetramer; dimer of dimers. The cofactor is Mg(2+). K(+) serves as cofactor.

The protein localises to the cytoplasm. The enzyme catalyses L-methionine + ATP + H2O = S-adenosyl-L-methionine + phosphate + diphosphate. The protein operates within amino-acid biosynthesis; S-adenosyl-L-methionine biosynthesis; S-adenosyl-L-methionine from L-methionine: step 1/1. In terms of biological role, catalyzes the formation of S-adenosylmethionine (AdoMet) from methionine and ATP. The overall synthetic reaction is composed of two sequential steps, AdoMet formation and the subsequent tripolyphosphate hydrolysis which occurs prior to release of AdoMet from the enzyme. This is S-adenosylmethionine synthase from Corynebacterium efficiens (strain DSM 44549 / YS-314 / AJ 12310 / JCM 11189 / NBRC 100395).